The primary structure comprises 588 residues: Adenine deaminase (588 aa).

The protein belongs to the metallo-dependent hydrolases superfamily. Adenine deaminase family. Homodimer. The cofactor is Mn(2+).

The enzyme catalyses adenine + H2O + H(+) = hypoxanthine + NH4(+). This chain is Adenine deaminase, found in Shigella boydii serotype 4 (strain Sb227).